A 157-amino-acid polypeptide reads, in one-letter code: Root allergen protein (157 aa).

It belongs to the BetVI family.

This is Root allergen protein from Taraxacum officinale (Common dandelion).